Here is a 322-residue protein sequence, read N- to C-terminus: Delta-aminolevulinic acid dehydratase (322 aa).

Positions 120, 122, and 130 each coordinate Zn(2+). The active-site Schiff-base intermediate with substrate is the Lys-195. Arg-205 and Arg-217 together coordinate 5-aminolevulinate. Mg(2+) is bound at residue Glu-233. Lys-248 functions as the Schiff-base intermediate with substrate in the catalytic mechanism. Residues Ser-274 and Tyr-312 each coordinate 5-aminolevulinate.

It belongs to the ALAD family. As to quaternary structure, homooctamer. The cofactor is Zn(2+).

It catalyses the reaction 2 5-aminolevulinate = porphobilinogen + 2 H2O + H(+). The protein operates within porphyrin-containing compound metabolism; protoporphyrin-IX biosynthesis; coproporphyrinogen-III from 5-aminolevulinate: step 1/4. Functionally, catalyzes an early step in the biosynthesis of tetrapyrroles. Binds two molecules of 5-aminolevulinate per subunit, each at a distinct site, and catalyzes their condensation to form porphobilinogen. This chain is Delta-aminolevulinic acid dehydratase (hemB), found in Archaeoglobus fulgidus (strain ATCC 49558 / DSM 4304 / JCM 9628 / NBRC 100126 / VC-16).